The primary structure comprises 374 residues: MNPSKSVTPPLWLLAELTYRCPLQCPYCSNPLDFSQQKKELTTEQWIEVFRQARAMGSVQLGFSGGEPLTRKDLPELIRAARDLGFYTNLITSGIGLTAKKLDAFADAGLDHIQISFQASDETLNAALAGSKKAFQQKLEMAKAVKAHGYPMVLNFVLHRHNIDQIDKIIDLCIELDADDVELATCQFYGWAQLNREGLLPTREQIANAEAVVADYRQRMGASGNLTNPAVRDAGLLRRAAETLHGRMGIDLPQRHADCTALPCHSARQLPVAFPSVLERTLDDIWYNSFGFNRYRGFDWMPEPCRSCDEKAKDFGGCRCQAFMLTGDADNTDPVCSKSPHHGKILEARREANCSDIKIQQLQFRNRSNSELIF.

In terms of domain architecture, Radical SAM core spans 7 to 222; sequence VTPPLWLLAE…VADYRQRMGA (216 aa). Residues Cys-21, Cys-25, and Cys-28 each contribute to the [4Fe-4S] cluster site.

The protein belongs to the radical SAM superfamily. PqqE family. In terms of assembly, interacts with PqqD. The interaction is necessary for activity of PqqE. [4Fe-4S] cluster is required as a cofactor.

The catalysed reaction is [PQQ precursor protein] + S-adenosyl-L-methionine = E-Y cross-linked-[PQQ precursor protein] + 5'-deoxyadenosine + L-methionine + H(+). The protein operates within cofactor biosynthesis; pyrroloquinoline quinone biosynthesis. Its function is as follows. Catalyzes the cross-linking of a glutamate residue and a tyrosine residue in the PqqA protein as part of the biosynthesis of pyrroloquinoline quinone (PQQ). The sequence is that of PqqA peptide cyclase from Kluyvera intermedia (Enterobacter intermedius).